We begin with the raw amino-acid sequence, 288 residues long: Bis(5'-nucleosyl)-tetraphosphatase, symmetrical (288 aa).

Belongs to the Ap4A hydrolase family.

The catalysed reaction is P(1),P(4)-bis(5'-adenosyl) tetraphosphate + H2O = 2 ADP + 2 H(+). Functionally, hydrolyzes diadenosine 5',5'''-P1,P4-tetraphosphate to yield ADP. This is Bis(5'-nucleosyl)-tetraphosphatase, symmetrical from Pseudomonas putida (strain ATCC 700007 / DSM 6899 / JCM 31910 / BCRC 17059 / LMG 24140 / F1).